A 439-amino-acid chain; its full sequence is Ribosomal protein uS12 methylthiotransferase RimO (439 aa).

An MTTase N-terminal domain is found at 3-115 (NKLHIVSLGC…IDELLVEKKS (113 aa)). 6 residues coordinate [4Fe-4S] cluster: C12, C46, C78, C146, C150, and C153. In terms of domain architecture, Radical SAM core spans 132–361 (TGSTYHAYIK…GKIAADVMQA (230 aa)).

Belongs to the methylthiotransferase family. RimO subfamily. It depends on [4Fe-4S] cluster as a cofactor.

It is found in the cytoplasm. The catalysed reaction is L-aspartate(89)-[ribosomal protein uS12]-hydrogen + (sulfur carrier)-SH + AH2 + 2 S-adenosyl-L-methionine = 3-methylsulfanyl-L-aspartate(89)-[ribosomal protein uS12]-hydrogen + (sulfur carrier)-H + 5'-deoxyadenosine + L-methionine + A + S-adenosyl-L-homocysteine + 2 H(+). Its function is as follows. Catalyzes the methylthiolation of an aspartic acid residue of ribosomal protein uS12. This is Ribosomal protein uS12 methylthiotransferase RimO from Sulfurimonas denitrificans (strain ATCC 33889 / DSM 1251) (Thiomicrospira denitrificans (strain ATCC 33889 / DSM 1251)).